Consider the following 275-residue polypeptide: MANPTIIRLQDGNVMPQLGLGVWKASNEEVIAAIHKALEVGYRSIDTATAYQNEEGVGKALKAASVAREELFITTKLWNDDQKRPREALQESLKKLQLDYLDLYLMHWPVPAIDHYVDAWKGMIALQKEGLVKSIGVCNFQIHHLQRLIDETGVPPVINQIELHPLMQQRQLHAWNATHKIQTESWSPLAQGGEGVFDQKVIRELADKYGKTPAQIVIRWHLDCGLVVIPKSVTPSRIAENFAVWDFRLDKDELGEIAKLDQGKRLGPDPDQSGG.

Y51 functions as the Proton donor in the catalytic mechanism. H107 lines the substrate pocket. 187-241 (SPLAQGGEGVFDQKVIRELADKYGKTPAQIVIRWHLDCGLVVIPKSVTPSRIAEN) is an NADP(+) binding site.

This sequence belongs to the aldo/keto reductase family. As to quaternary structure, monomer.

It localises to the cytoplasm. The catalysed reaction is hydroxyacetone + NADP(+) = methylglyoxal + NADPH + H(+). In terms of biological role, aldo-keto reductase that significantly contributes to cellular methylglyoxal detoxification by catalyzing the NADPH-dependent conversion of methylglyoxal to acetol. The protein is Putative methylglyoxal reductase DkgA of Salmonella typhi.